The primary structure comprises 153 residues: MPQPTRPYSFMELCREYTLEQLLKFLNVTLDTLMLPCHFCSSFMDLNNKASYLASQLKVIVKDCCFKGACIKCRRKLAFAERQKYQVCVGEADLVEAMVGSHVINLTVRCSECLALLTASEKLDAKCELQTFILVRHMWRTSCRACRTPAIEC.

2 zinc fingers span residues 37–73 (CHFCSSFMDLNNKASYLASQLKVIVKDCCFKGACIKC) and 110–146 (CSECLALLTASEKLDAKCELQTFILVRHMWRTSCRAC).

Belongs to the papillomaviridae E6 protein family. As to quaternary structure, forms homodimers. Interacts with ubiquitin-protein ligase UBE3A/E6-AP; this interaction stimulates UBE3A ubiquitin activity. Interacts with host BAK1.

The protein resides in the host cytoplasm. The protein localises to the host nucleus. Functionally, plays a major role in the induction and maintenance of cellular transformation. E6 associates with host UBE3A/E6-AP ubiquitin-protein ligase and modulates its activity. Protects host keratinocytes from apoptosis by mediating the degradation of host BAK1. May also inhibit host immune response. The sequence is that of Protein E6 from Micromys minutus papillomavirus (MmPV).